The primary structure comprises 299 residues: Probable endonuclease 4 (299 aa).

Zn(2+) contacts are provided by H69, H110, E145, D179, H182, H214, D227, H229, and E259.

Belongs to the AP endonuclease 2 family. Requires Zn(2+) as cofactor.

The enzyme catalyses Endonucleolytic cleavage to 5'-phosphooligonucleotide end-products.. Endonuclease IV plays a role in DNA repair. It cleaves phosphodiester bonds at apurinic or apyrimidinic (AP) sites, generating a 3'-hydroxyl group and a 5'-terminal sugar phosphate. The chain is Probable endonuclease 4 from Geobacillus kaustophilus (strain HTA426).